Here is a 138-residue protein sequence, read N- to C-terminus: DNA-directed RNA polymerase subunit omega (138 aa).

A disordered region spans residues 104 to 138 (GNSDGLENSSNSRDDNPLGRDNFFSTPENRNNTNS). Positions 126–138 (FFSTPENRNNTNS) are enriched in polar residues.

The protein belongs to the RNA polymerase subunit omega family. In terms of assembly, the RNAP catalytic core consists of 2 alpha, 1 beta, 1 beta' and 1 omega subunit. When a sigma factor is associated with the core the holoenzyme is formed, which can initiate transcription.

The enzyme catalyses RNA(n) + a ribonucleoside 5'-triphosphate = RNA(n+1) + diphosphate. Promotes RNA polymerase assembly. Latches the N- and C-terminal regions of the beta' subunit thereby facilitating its interaction with the beta and alpha subunits. This is DNA-directed RNA polymerase subunit omega from Ehrlichia chaffeensis (strain ATCC CRL-10679 / Arkansas).